The following is an 89-amino-acid chain: Small ribosomal subunit protein uS15 (89 aa).

It belongs to the universal ribosomal protein uS15 family. In terms of assembly, part of the 30S ribosomal subunit. Forms a bridge to the 50S subunit in the 70S ribosome, contacting the 23S rRNA.

Functionally, one of the primary rRNA binding proteins, it binds directly to 16S rRNA where it helps nucleate assembly of the platform of the 30S subunit by binding and bridging several RNA helices of the 16S rRNA. Its function is as follows. Forms an intersubunit bridge (bridge B4) with the 23S rRNA of the 50S subunit in the ribosome. This chain is Small ribosomal subunit protein uS15, found in Nitratidesulfovibrio vulgaris (strain DSM 19637 / Miyazaki F) (Desulfovibrio vulgaris).